A 298-amino-acid polypeptide reads, in one-letter code: Large ribosomal subunit protein uL18 (298 aa).

The protein belongs to the universal ribosomal protein uL18 family. In terms of assembly, component of the large ribosomal subunit. Mature ribosomes consist of a small (40S) and a large (60S) subunit. The 40S subunit contains about 32 different proteins and 1 molecule of RNA (18S). The 60S subunit contains 45 different proteins and 3 molecules of RNA (25S, 5.8S and 5S).

It is found in the cytoplasm. Component of the ribosome, a large ribonucleoprotein complex responsible for the synthesis of proteins in the cell. The small ribosomal subunit (SSU) binds messenger RNAs (mRNAs) and translates the encoded message by selecting cognate aminoacyl-transfer RNA (tRNA) molecules. The large subunit (LSU) contains the ribosomal catalytic site termed the peptidyl transferase center (PTC), which catalyzes the formation of peptide bonds, thereby polymerizing the amino acids delivered by tRNAs into a polypeptide chain. The nascent polypeptides leave the ribosome through a tunnel in the LSU and interact with protein factors that function in enzymatic processing, targeting, and the membrane insertion of nascent chains at the exit of the ribosomal tunnel. In Candida albicans (strain SC5314 / ATCC MYA-2876) (Yeast), this protein is Large ribosomal subunit protein uL18.